A 268-amino-acid chain; its full sequence is Esterase GME11355 (268 aa).

Catalysis depends on charge relay system residues S122, D212, and H240.

It belongs to the LovG family.

The protein operates within secondary metabolite biosynthesis. In terms of biological role, esterase; part of the gene cluster that mediates the biosynthesis of dibenzodioxocinones such as pestalotiollide B, a novel class of inhibitors against cholesterol ester transfer protein (CEPT). The biosynthesis initiates from condensation of acetate and malonate units catalyzed by the non-reducing PKS pks8/GME11356. Pks8/GME11356 lacks a thioesterase (TE) domain, which is important to the cyclizing of the third ring of atrochrysone carboxylic acid, and the esterase GME11355 might play the role of TE and catalyzes the cyclization reaction of the C ring. The lactamase-like protein GME11357 (or other beta-lactamases in Pestalotiopsis microspora) probably hydrolyzes the thioester bond between the ACP of pks8/GME11356 and the intermediate to release atrochrysone carboxylic acid, which is spontaneously dehydrates to form endocrocin anthrone. Endocrocin anthrone is further converted to emodin via the endocrocin intermediate. Emodin is then oxidized by several enzymes such as the Baeyer-Villiger oxidase GME11358, the oxidoreductase GME11367, the short chain dehydrogenase/reductase GME11373, as well as by other oxidoreductases from the cluster, to modify the A and C rings and open the B ring, and finally yield monodictyphenone. The prenyltransferase GME11375 may catalyze the addition reaction between the C5 side chains and the carbon bone of dibenzodioxocinones. The remaining biochemical reactions to the final product dibenzodioxocinones should be methylation catalyzed by methyltransferase GME11366 and reduction and lactonization reaction catalyzed by a series of oxidordeuctases. This chain is Esterase GME11355, found in Pestalotiopsis microspora.